The sequence spans 602 residues: Baseplate wedge protein gp10 (602 aa).

Residues 501-512 are compositionally biased toward polar residues; the sequence is LNNNDLDSGGNP. Residues 501–523 form a disordered region; sequence LNNNDLDSGGNPSHTAGGTGGST.

Belongs to the T4likevirus baseplate wedge protein gp10 family. As to quaternary structure, homotrimer; disulfide-linked. Heteromultimer with gp7; a gp10 molecule is disulfide-linked to gp7 and the other two remaining gp10 molecules form a disulfide bond. The gp10 trimer interacts with gp11 trimer and with the short tail fiber (STF) composed of the gp12 trimer. Part of the baseplate macromolecular complex which consists of gp5, gp5.4, gp27 (central spike complex); gp6, gp25, gp53 (inner baseplate); gp7, gp8 (intermediate baseplate); gp9, gp10, gp11, gp12 (peripheral); gp48 and gp54 (proximal region of the tail tube).

Its subcellular location is the virion. Peripheral baseplate protein that is part of the tail fiber network. Connects the short tail fibers to the baseplate. During infection, the baseplate undergoes a conformational change from a dome-shaped to a star-shaped structure. At this point, gp10 rotates and acts as a lever that unfolds the short tail fibers, which then interact with host cell surface receptors. Involved in the tail assembly. This chain is Baseplate wedge protein gp10 (10), found in Escherichia coli (Bacteriophage T4).